The following is a 443-amino-acid chain: Thymidine phosphorylase (443 aa).

This sequence belongs to the thymidine/pyrimidine-nucleoside phosphorylase family. In terms of assembly, homodimer.

The enzyme catalyses thymidine + phosphate = 2-deoxy-alpha-D-ribose 1-phosphate + thymine. The protein operates within pyrimidine metabolism; dTMP biosynthesis via salvage pathway; dTMP from thymine: step 1/2. The enzymes which catalyze the reversible phosphorolysis of pyrimidine nucleosides are involved in the degradation of these compounds and in their utilization as carbon and energy sources, or in the rescue of pyrimidine bases for nucleotide synthesis. The protein is Thymidine phosphorylase of Shewanella baltica (strain OS185).